We begin with the raw amino-acid sequence, 527 residues long: Acyl-coenzyme A thioesterase 4, mitochondrial (527 aa).

The N-terminal 75 residues, methionine 1–phenylalanine 75, are a transit peptide targeting the mitochondrion. 2 consecutive HotDog ACOT-type domains span residues isoleucine 172 to lysine 294 and lysine 370 to alanine 487.

This sequence belongs to the acyl coenzyme A hydrolase family. In terms of tissue distribution, mostly expressed at low levels in glandular trichomes (lupulin glands), and, to a lower extent, in stems, leaves, flowers and cones.

Its subcellular location is the mitochondrion. The enzyme catalyses 2-methylpropanoyl-CoA + H2O = 2-methylpropanoate + CoA + H(+). It catalyses the reaction propanoyl-CoA + H2O = propanoate + CoA + H(+). It carries out the reaction octanoyl-CoA + H2O = octanoate + CoA + H(+). The catalysed reaction is butanoyl-CoA + H2O = butanoate + CoA + H(+). The enzyme catalyses 3-methylbutanoyl-CoA + H2O = 3-methylbutanoate + CoA + H(+). It catalyses the reaction 2-methylbutanoyl-CoA + H2O = 2-methylbutanoate + CoA + H(+). In terms of biological role, acyl-CoA thioesterases are a group of enzymes that catalyze the hydrolysis of acyl-CoAs to the free fatty acid and coenzyme A (CoASH), providing the potential to regulate intracellular levels of acyl-CoAs, free fatty acids and CoASH. Active on acyl CoAs with short chains (propanoyl-CoA and butanoyl-CoA), branched short chains (2-methylpropanoyl-CoA, 2-methylbutanoyl-CoA and 3-methylbutanoyl-CoA) and medium chains (octanoyl-CoA). The protein is Acyl-coenzyme A thioesterase 4, mitochondrial of Humulus lupulus (European hop).